Reading from the N-terminus, the 874-residue chain is DNA mismatch repair protein MutS (874 aa).

Residue 613–620 (GPNMGGKS) participates in ATP binding. Residues 799 to 820 (EAGSTPSPAPVSVNEPKPAAPT) are disordered.

It belongs to the DNA mismatch repair MutS family.

Functionally, this protein is involved in the repair of mismatches in DNA. It is possible that it carries out the mismatch recognition step. This protein has a weak ATPase activity. The sequence is that of DNA mismatch repair protein MutS from Marinobacter nauticus (strain ATCC 700491 / DSM 11845 / VT8) (Marinobacter aquaeolei).